An 881-amino-acid chain; its full sequence is MDAAGASCSSSEAVARELLLAALQDLSQEQLKRFRHKLRDAPLDGRSIPWGRLEHSDAVDLTDKLIEFYAPEPAVDVTRKILKKADIRDVSLRLKEQQLQRLGSSSALLTVSEYKKKYREHVLRQHAKVKERNARSVKINKRFTKLLIAPGSGAGEDELLGTSGEPEPERARRSDTHTFNRLFRGNDDEGPRPLTVVLQGPAGIGKTMAAKKILYDWAGGKLYHSQVDFAFFMPCGELLERPGTRSLADLILEQCPDRTAPVRRILAQPHRLLFILDGADELPTLAAPEATPCRDPFEATSGLRVLSGLLSQELLPSARLLVTSRNATLGRLQGRLCSPQCAEVRGFSDKDKKKYFFKFFRDERKAERAYRFVKENETLYALCFVPFVCWIVCTVLLQQMELGRDLSRTSKTTTSVYLLFITSMLKSAGTNGPRVQGELRMLCRLAREGILKHQAQFSEKDLERLKLQGSQVQTMFLSKKELPGVLETVVTYQFIDQSFQEFLAALSYLLDAEGAPGNSAGSVQMLVNSDAGLRGHLALTTRFLFGLLSTERIRDIGNHFGCVVPGRVKQDTLRWVQGQSQPKVATVGAEKKDELKDEEAEEEEEEEEEEEEELNFGLELLYCLYETQEDDFVRQALSSLPEMVLERVRLTRMDLEVLSYCVQCCPDGQALRLVSCGLVAAKEKKKKKKSFMNRLKGSQSTGKQPPASLLRPLCEAMITQQCGLSILTLSHCKLPDAVCRDLSEALKVAPSLRELGLLQNRLTEAGLRLLSQGLAWPKCKVQTLRIQMPGLQEVIHYLVIVLQQSPVLTTLDLSGCQLPGTVVEPLCSALKHPKCGLKTLSLTSVELTENPLRELQAVKTLKPDLAIIHSKLGTHPQPLKG.

In terms of domain architecture, Pyrin spans M1–V129. S104 carries the phosphoserine modification. Residues A154–D175 are disordered. The NACHT domain occupies L194–L510. G200–T207 contributes to the ATP binding site. Residues E459 to G484 form an LRR 1 repeat. The disordered stretch occupies residues Q579–E611. Residues K596–E611 show a composition bias toward acidic residues. LRR repeat units follow at residues L637–Y660, A749–Q772, and T839–P863.

Belongs to the NLRP family. As to quaternary structure, homomultimer; forms the NLRP6 inflammasome polymeric complex, a filament composed of homopolymers in response to pathogens and other damage-associated signals. The core of NLRP6 inflammasomes consists of a signal sensor component (NLRP6), an adapter (PYCARD/ASC), which recruits effector pro-inflammatory caspases (CASP1 and CASP4). Interacts (via pyrin domain) with PYCARD/ASC (via pyrin domain); interaction takes place following NLRP6 activation and formation of liquid-liquid phase separation (LLPS), initiating nucleation which greatly enhances further addition of soluble PYCARD/ASC molecules to the speck in a prion-like polymerization process. Clustered PYCARD/ASC nucleates the formation of CASP1 (or possibly CASP4) filaments through the interaction of their respective CARD domains, acting as a platform for CASP1 polymerization. CASP1 filament formation increases local enzyme concentration, resulting in trans-autocleavage and activation. Active CASP1 then processes IL1B and IL18 precursors, leading to the release of mature cytokines in the extracellular milieu and inflammatory response. Interacts with DHX15. In terms of processing, polyubiquitinated with 'Lys-63'-linked chains, promoting the interaction with PYCARD/ASC and formation of the NLRP6 inflammasome. Deubiquitination by CYLD decreases the interaction with PYCARD/ASC. Detected in several tissues. Expressed in renal epithelial cells in medullary thick ascending limb of Henle, as well as in salivary gland apical epithelium (at protein level). Isoform 1 is widely expressed. Isoform 2 is primarily expressed in kidney (at protein level).

Its subcellular location is the cytoplasm. The protein resides in the inflammasome. It is found in the cell membrane. It localises to the nucleus membrane. Acts as the sensor component of the NLRP6 inflammasome, which mediates inflammasome activation in response to various pathogen-associated signals, leading to maturation and secretion of IL1B and IL18. Inflammasomes are supramolecular complexes that assemble in the cytosol in response to pathogens and other damage-associated signals and play critical roles in innate immunity and inflammation. Acts as a recognition receptor (PRR): recognizes and binds specific pathogens and other damage-associated signals, such as lipoteichoic acid (LTA), a cell-wall component of Gram-positive bacteria, or double stranded RNA (dsRNA). May also recognize and bind lipopolysaccharide (LPS), a major component of the outer membrane of Gram-negative bacteria; however, LPS is probably not a major activator of the NLRP6 inflammasome. Following LTA- or dsRNA-binding, NLRP6 undergoes liquid-liquid phase separation (LLPS), enhancing multivalent interactions, an essential step for the formation of the NLRP6 inflammasome polymeric complex. The NLRP6 inflammasome acts by promoting recruitment of effector pro-inflammatory caspases (CASP1 and/or CASP4) that catalyze maturation and secretion of IL1B and IL18 in the extracellular milieu. The NLRP6 inflammasome plays a central role in the maintenance of epithelial integrity and host defense against microbial infections in the intestine. Required to restrict infection against Gram-positive bacteria by recognizing lipoteichoic acid (LTA), leading to recruitment of CASP4 and CASP1, and subsequent maturation and secretion of IL1B and IL18. Involved in intestinal antiviral innate immunity together with DHX15: recognizes and binds viral dsRNA to restrict infection by enteric viruses through the interferon pathway and GSDMD-dependent release of IL18. Required to prevent infection by the apicomplexan parasite Cryptosporidium in enterocytes by promoting GSDMD-dependent release of IL18. The NLRP6 inflammasome may also regulate the gut microbiota composition by acting as a sensor of microbiota-associated metabolites to form a PYCARD/ASC-dependent inflammasome for downstream IL18 release and secretion of antimicrobial peptides. Essential for gut mucosal self-renewal and proliferation. Regulate mucus secretion in an inflammasome- and autophagy-dependent manner to prevent invasion by enteric bacteria,. During systemic bacterial infections, the NLRP6 inflammasome negatively regulates neutrophil recruitment and neutrophil extracellular traps (NETs) formation. May promote peripheral nerve recovery following injury via an inflammasome-independent mechanism. The chain is NACHT, LRR and PYD domains-containing protein 6 from Rattus norvegicus (Rat).